We begin with the raw amino-acid sequence, 275 residues long: NH(3)-dependent NAD(+) synthetase (275 aa).

50-57 (GISGGVDS) is an ATP binding site. D56 serves as a coordination point for Mg(2+). Position 147 (R147) interacts with deamido-NAD(+). T167 contacts ATP. Mg(2+) is bound at residue E172. The deamido-NAD(+) site is built by K180 and D187. 2 residues coordinate ATP: K196 and T218. 267-268 (HK) contributes to the deamido-NAD(+) binding site.

It belongs to the NAD synthetase family. As to quaternary structure, homodimer.

The enzyme catalyses deamido-NAD(+) + NH4(+) + ATP = AMP + diphosphate + NAD(+) + H(+). It functions in the pathway cofactor biosynthesis; NAD(+) biosynthesis; NAD(+) from deamido-NAD(+) (ammonia route): step 1/1. Functionally, catalyzes the ATP-dependent amidation of deamido-NAD to form NAD. Uses ammonia as a nitrogen source. The chain is NH(3)-dependent NAD(+) synthetase from Pseudomonas putida (strain GB-1).